The following is a 74-amino-acid chain: Translation initiation factor IF-1 (74 aa).

The S1-like domain occupies 1–72 (MSKQDLIEME…TKGRITYRLR (72 aa)).

It belongs to the IF-1 family. In terms of assembly, component of the 30S ribosomal translation pre-initiation complex which assembles on the 30S ribosome in the order IF-2 and IF-3, IF-1 and N-formylmethionyl-tRNA(fMet); mRNA recruitment can occur at any time during PIC assembly.

The protein resides in the cytoplasm. One of the essential components for the initiation of protein synthesis. Stabilizes the binding of IF-2 and IF-3 on the 30S subunit to which N-formylmethionyl-tRNA(fMet) subsequently binds. Helps modulate mRNA selection, yielding the 30S pre-initiation complex (PIC). Upon addition of the 50S ribosomal subunit IF-1, IF-2 and IF-3 are released leaving the mature 70S translation initiation complex. This is Translation initiation factor IF-1 from Trichodesmium erythraeum (strain IMS101).